A 427-amino-acid chain; its full sequence is MADTKAKLTLNGDTAVELDVLKGTLGQDVIDIRTLGSKGVFTFDPGFTSTASCESKITFIDGDEGILLHRGFPIDQLATDSNYLEVCYILLNGEKPTQEQYDEFKTTVTRHTMIHEQITRLFHAFRRDSHPMAVMCGITGALAAFYHDSLDVNNPRHREIAAFRLLSKMPTMAAMCYKYSIGQPFVYPRNDLSYAGNFLNMMFSTPCEPYEVNPILERAMDRILILHADHEQNASTSTVRTAGSSGANPFACIAAGIASLWGPAHGGANEAALKMLEEISSVKHIPEFVRRAKDKNDSFRLMGFGHRVYKNYDPRATVMRETCHEVLKELGTKDDLLEVAMELENIALNDPYFIEKKLYPNVDFYSGIILKAMGIPSSMFTVIFAMARTVGWIAHWSEMHSDGMKIARPRQLYTGYEKRDFKSDIKR.

K283 is subject to N6-acetyllysine. Catalysis depends on residues H306 and D363.

This sequence belongs to the citrate synthase family. Homohexamer.

It carries out the reaction oxaloacetate + acetyl-CoA + H2O = citrate + CoA + H(+). Its pathway is carbohydrate metabolism; tricarboxylic acid cycle; isocitrate from oxaloacetate: step 1/2. The polypeptide is Citrate synthase (gltA) (Escherichia coli O6:H1 (strain CFT073 / ATCC 700928 / UPEC)).